A 442-amino-acid polypeptide reads, in one-letter code: Glycolipid 2-alpha-mannosyltransferase (442 aa).

Residues 1–11 (MALFLSKRLLR) lie on the Cytoplasmic side of the membrane. The helical; Signal-anchor for type II membrane protein transmembrane segment at 12–30 (FTVIAGAVIVLLLTLNSNS) threads the bilayer. Residues 31–118 (RTQQYIPSSI…YITPSFANKA (88 aa)) form a stem region region. Residues 31 to 442 (RTQQYIPSSI…KPKNWKKFRE (412 aa)) lie on the Lumenal side of the membrane. Residues 68 to 95 (EQSALNSEASEDSEAMDEESKALKAAAE) form a disordered region. Residues 85–95 (EESKALKAAAE) show a composition bias toward basic and acidic residues. The segment at 119 to 442 (GKPKACYVTL…KPKNWKKFRE (324 aa)) is catalytic. The N-linked (GlcNAc...) asparagine glycan is linked to Asn-197. The Nucleophile role is filled by Glu-329.

It belongs to the glycosyltransferase 15 family. It depends on Mn(2+) as a cofactor.

It is found in the golgi apparatus membrane. It functions in the pathway protein modification; protein glycosylation. Mannosyltransferase that transfers an alpha-D-mannosyl residue from GDP-mannose into lipid-linked oligosaccharide, forming an alpha-(1-&gt;2)-D-mannosyl-D-mannose linkage. Required for the attachment of the third mannose residue of O-linked saccharides. This Saccharomyces cerevisiae (strain ATCC 204508 / S288c) (Baker's yeast) protein is Glycolipid 2-alpha-mannosyltransferase (KRE2).